Reading from the N-terminus, the 76-residue chain is Acyl carrier protein (76 aa).

The Carrier domain maps to 2–76 (SDIAERVKKI…QAIDYIQSHT (75 aa)). S36 is subject to O-(pantetheine 4'-phosphoryl)serine.

Belongs to the acyl carrier protein (ACP) family. In terms of processing, 4'-phosphopantetheine is transferred from CoA to a specific serine of apo-ACP by AcpS. This modification is essential for activity because fatty acids are bound in thioester linkage to the sulfhydryl of the prosthetic group.

The protein resides in the cytoplasm. It functions in the pathway lipid metabolism; fatty acid biosynthesis. Functionally, carrier of the growing fatty acid chain in fatty acid biosynthesis. This Methylococcus capsulatus (strain ATCC 33009 / NCIMB 11132 / Bath) protein is Acyl carrier protein.